Reading from the N-terminus, the 453-residue chain is UDP-N-acetylmuramoylalanine--D-glutamate ligase (453 aa).

An ATP-binding site is contributed by 115-121 (GTNGKTT).

This sequence belongs to the MurCDEF family.

Its subcellular location is the cytoplasm. The enzyme catalyses UDP-N-acetyl-alpha-D-muramoyl-L-alanine + D-glutamate + ATP = UDP-N-acetyl-alpha-D-muramoyl-L-alanyl-D-glutamate + ADP + phosphate + H(+). It participates in cell wall biogenesis; peptidoglycan biosynthesis. Functionally, cell wall formation. Catalyzes the addition of glutamate to the nucleotide precursor UDP-N-acetylmuramoyl-L-alanine (UMA). The polypeptide is UDP-N-acetylmuramoylalanine--D-glutamate ligase (Geotalea daltonii (strain DSM 22248 / JCM 15807 / FRC-32) (Geobacter daltonii)).